A 243-amino-acid polypeptide reads, in one-letter code: uncharacterized protein (243 aa).

An N-terminal signal peptide occupies residues methionine 1–glycine 16. Cysteine 17 is lipidated: N-palmitoyl cysteine. Cysteine 17 is lipidated: S-diacylglycerol cysteine.

The protein resides in the cell membrane. This is an uncharacterized protein from Bacillus subtilis (strain 168).